The chain runs to 188 residues: NAD(P)H-quinone oxidoreductase subunit 6, chloroplastic (188 aa).

A run of 5 helical transmembrane segments spans residues 10-30 (GILL…ILLN), 32-52 (IVQS…LYLV), 61-81 (AQVL…VMLI), 97-117 (GNNI…SIIL), and 153-173 (FLLP…GAIT).

The protein belongs to the complex I subunit 6 family. As to quaternary structure, NDH is composed of at least 16 different subunits, 5 of which are encoded in the nucleus.

The protein localises to the plastid. Its subcellular location is the chloroplast thylakoid membrane. It carries out the reaction a plastoquinone + NADH + (n+1) H(+)(in) = a plastoquinol + NAD(+) + n H(+)(out). It catalyses the reaction a plastoquinone + NADPH + (n+1) H(+)(in) = a plastoquinol + NADP(+) + n H(+)(out). NDH shuttles electrons from NAD(P)H:plastoquinone, via FMN and iron-sulfur (Fe-S) centers, to quinones in the photosynthetic chain and possibly in a chloroplast respiratory chain. The immediate electron acceptor for the enzyme in this species is believed to be plastoquinone. Couples the redox reaction to proton translocation, and thus conserves the redox energy in a proton gradient. The polypeptide is NAD(P)H-quinone oxidoreductase subunit 6, chloroplastic (ndhG) (Psilotum nudum (Whisk fern)).